The chain runs to 205 residues: Large ribosomal subunit protein uL18 (205 aa).

The protein belongs to the universal ribosomal protein uL18 family. Part of the 50S ribosomal subunit. Contacts the 5S and 23S rRNAs.

In terms of biological role, this is one of the proteins that bind and probably mediate the attachment of the 5S RNA into the large ribosomal subunit, where it forms part of the central protuberance. In Pyrobaculum aerophilum (strain ATCC 51768 / DSM 7523 / JCM 9630 / CIP 104966 / NBRC 100827 / IM2), this protein is Large ribosomal subunit protein uL18.